Reading from the N-terminus, the 93-residue chain is Small ribosomal subunit protein uS19 (93 aa).

Belongs to the universal ribosomal protein uS19 family.

Its function is as follows. Protein S19 forms a complex with S13 that binds strongly to the 16S ribosomal RNA. This chain is Small ribosomal subunit protein uS19, found in Ehrlichia chaffeensis (strain ATCC CRL-10679 / Arkansas).